Consider the following 440-residue polypeptide: C-terminal-binding protein 1 (440 aa).

Residues 1–70 (MGSSHLLNKG…EIHEKVLNEA (70 aa)) form an interaction with GLIS2 1 region. Residues serine 100, 180–185 (IGLGRV), aspartate 204, 237–243 (CGLNEHN), 264–266 (TAR), and aspartate 290 contribute to the NAD(+) site. Arginine 266 is a catalytic residue. Residues 288 to 360 (ALDVHESEPF…VNKDHLTAAT (73 aa)) form an interaction with GLIS2 2 region. Glutamate 295 is an active-site residue. A Phosphoserine modification is found at serine 300. The active-site Proton donor is the histidine 315. 315 to 318 (HAAW) is an NAD(+) binding site. A disordered region spans residues 408–440 (SHGLPPVAHPPHAPSPGQTVKPEADRDHASDQL). At serine 422 the chain carries Phosphoserine; by HIPK2. A Glycyl lysine isopeptide (Lys-Gly) (interchain with G-Cter in SUMO) cross-link involves residue lysine 428. Basic and acidic residues predominate over residues 429–440 (PEADRDHASDQL).

It belongs to the D-isomer specific 2-hydroxyacid dehydrogenase family. In terms of assembly, homo- or heterodimer. Heterodimer with CTBP2. Interacts with PRDM16; the interaction represses white adipose tissue (WAT)-specific genes expression. Interacts with GLIS2, FOXP2, HDAC4, HDAC5, HDAC9 and ZNF217. Interacts with ELK3 (via its PXDLS motif). Interacts with RBBP8 (via its PXDLS motif); the interaction is disrupted by binding to adenovirus E1A. Interacts with FOXP1, HIPK2, PNN, NRIP1, MECOM, ZFHX1B and WIZ. Interacts with ZNF366 (via PXDLS motif). Interaction with SATB1 (non-acetylated form); the interaction stabilizes its attachment to DNA and promotes transcription repression. Interacts with BCL6; the interaction is required for BCL6 transcriptional autoinhibition and inhibition of some BCL6 target genes. Interacts with IKZF4. Interacts with MCRIP1 (unphosphorylated form, via the PXDLS motif); competitively inhibiting CTBP-ZEB1 interaction. Interacts with Bassoon/BSN; this interaction targets and anchors CTBP1 to presynapses. Interacts with SIMC1. As to quaternary structure, (Microbial infection) Interacts with Epstein-Barr virus EBNA3. Interacts with Epstein-Barr virus EBNA6; this interaction leads to gene repression, but also seems to interfere with the repressive function of CtBP pre-bound to DNA, leading to EBNA6 mediated up-regulation of many cellular genes. (Microbial infection) Interacts with adenovirus E1A protein (via its C-terminus); the interaction disrupts the interaction of CTBP1 with RBBP8. In terms of assembly, (Microbial infection) Interacts with human adenovirus 5 E1A protein; this interaction seems to potentiate viral replication. NAD(+) serves as cofactor. The level of phosphorylation appears to be regulated during the cell cycle. Phosphorylation by HIPK2 on Ser-422 induces proteasomal degradation. Post-translationally, ADP-ribosylated; when cells are exposed to brefeldin A. In terms of processing, sumoylation on Lys-428 is promoted by the E3 SUMO-protein ligase CBX4. As to expression, expressed in germinal center B-cells.

The protein localises to the cytoplasm. The protein resides in the nucleus. Functionally, corepressor targeting diverse transcription regulators such as GLIS2 or BCL6. Has dehydrogenase activity. Involved in controlling the equilibrium between tubular and stacked structures in the Golgi complex. Functions in brown adipose tissue (BAT) differentiation. The chain is C-terminal-binding protein 1 (CTBP1) from Homo sapiens (Human).